The following is a 493-amino-acid chain: E3 ubiquitin-protein ligase Hakai (493 aa).

2 disordered regions span residues 1-20 and 28-61; these read MDHN…LGGL and IKLI…GDEE. Residues 7–16 show a composition bias toward polar residues; it reads DLQGTNSSAS. Residues 109–149 form an RING-type zinc finger; it reads CDKCGLPIKMYGRMIPCKHVFCYDCAILHEKKGDKMCPGCN. The tract at residues 148–206 is HYB domain; it reads CNEPVQRIEQCVRGSLFMCSIVQGCKRTYLSQRDLQAHINHRHMRAGKPVTRPPLEPVH. The C2H2-type zinc finger occupies 164–190; the sequence is FMCSIVQGCKRTYLSQRDLQAHINHRH. The tract at residues 253–493 is disordered; the sequence is YNQPHEDIRP…DQARYRPYYQ (241 aa). Pro residues-rich tracts occupy residues 262-276, 342-352, 372-389, and 399-412; these read PPPA…PPRP, APPPPPPPPIS, APPP…PPPG, and MNHP…PQHG. Over residues 427-444 the composition is skewed to polar residues; that stretch reads NPNSLPQFSEDQGTLSPP. The segment covering 459–469 has biased composition (pro residues); the sequence is PRGPPPPPRMQ. A compositionally biased stretch (low complexity) spans 470 to 480; sequence GPPAQAPLAGP.

It belongs to the Hakai family. Homodimer. Interacts with tyrosine-phosphorylated SRC substrates. Component of the WMM complex, a N6-methyltransferase complex composed of a catalytic subcomplex, named MAC, and of an associated subcomplex, named MACOM. Component of the MACOM subcomplex.

Its subcellular location is the nucleus speckle. The protein localises to the nucleus. It is found in the nucleoplasm. It carries out the reaction S-ubiquitinyl-[E2 ubiquitin-conjugating enzyme]-L-cysteine + [acceptor protein]-L-lysine = [E2 ubiquitin-conjugating enzyme]-L-cysteine + N(6)-ubiquitinyl-[acceptor protein]-L-lysine.. Its pathway is protein modification; protein ubiquitination. Functionally, E3 ubiquitin-protein ligase that mediates ubiquitination of several tyrosine-phosphorylated Src substrates. Associated component of the WMM complex, a complex that mediates N6-methyladenosine (m6A) methylation of RNAs, a modification that plays a role in the efficiency of mRNA splicing and RNA processing. In Gallus gallus (Chicken), this protein is E3 ubiquitin-protein ligase Hakai.